A 211-amino-acid chain; its full sequence is MANCVVLDWQGQEAGKATLDLKVAKETTAVDLIHRAVVRQQAHSRQGTASTLTRSEVRGGGRKPYKQKGTGRARQGSIRTPLRPGGGIIFGPKPRSFSLGMNRKERRLALRTALMARINDLMIVQDFGTALKVPKTREIVEALSRFGIADDAKVLIILAQPSEIIIRSVRNIERVKVIGADQLNVFDLLNANSLVIGEKALSTIKEVYGDD.

The interval 40–80 (QQAHSRQGTASTLTRSEVRGGGRKPYKQKGTGRARQGSIRT) is disordered. Positions 41–54 (QAHSRQGTASTLTR) are enriched in polar residues. Over residues 60-71 (GGRKPYKQKGTG) the composition is skewed to basic residues.

Belongs to the universal ribosomal protein uL4 family. Part of the 50S ribosomal subunit.

Functionally, one of the primary rRNA binding proteins, this protein initially binds near the 5'-end of the 23S rRNA. It is important during the early stages of 50S assembly. It makes multiple contacts with different domains of the 23S rRNA in the assembled 50S subunit and ribosome. Its function is as follows. Forms part of the polypeptide exit tunnel. The polypeptide is Large ribosomal subunit protein uL4 (Prochlorococcus marinus (strain MIT 9211)).